The chain runs to 353 residues: 3-dehydroquinate synthase (353 aa).

NAD(+)-binding positions include 61–66 (DGEEAK), 119–120 (TT), Lys-132, and Lys-141. The Zn(2+) site is built by Glu-174, His-238, and His-254.

The protein belongs to the sugar phosphate cyclases superfamily. Dehydroquinate synthase family. The cofactor is Co(2+). It depends on Zn(2+) as a cofactor. Requires NAD(+) as cofactor.

It is found in the cytoplasm. The enzyme catalyses 7-phospho-2-dehydro-3-deoxy-D-arabino-heptonate = 3-dehydroquinate + phosphate. Its pathway is metabolic intermediate biosynthesis; chorismate biosynthesis; chorismate from D-erythrose 4-phosphate and phosphoenolpyruvate: step 2/7. Catalyzes the conversion of 3-deoxy-D-arabino-heptulosonate 7-phosphate (DAHP) to dehydroquinate (DHQ). The sequence is that of 3-dehydroquinate synthase from Sulfolobus acidocaldarius (strain ATCC 33909 / DSM 639 / JCM 8929 / NBRC 15157 / NCIMB 11770).